Reading from the N-terminus, the 368-residue chain is Alanine racemase (368 aa).

Catalysis depends on Lys-40, which acts as the Proton acceptor; specific for D-alanine. Lys-40 is subject to N6-(pyridoxal phosphate)lysine. Residue Arg-136 coordinates substrate. Tyr-263 acts as the Proton acceptor; specific for L-alanine in catalysis. Residue Met-310 coordinates substrate.

This sequence belongs to the alanine racemase family. Requires pyridoxal 5'-phosphate as cofactor.

The catalysed reaction is L-alanine = D-alanine. The protein operates within amino-acid biosynthesis; D-alanine biosynthesis; D-alanine from L-alanine: step 1/1. Its function is as follows. Catalyzes the interconversion of L-alanine and D-alanine. May also act on other amino acids. This is Alanine racemase (alr) from Streptococcus uberis (strain ATCC BAA-854 / 0140J).